The primary structure comprises 464 residues: Asparagine--tRNA ligase (464 aa).

The protein belongs to the class-II aminoacyl-tRNA synthetase family. As to quaternary structure, homodimer.

The protein localises to the cytoplasm. It catalyses the reaction tRNA(Asn) + L-asparagine + ATP = L-asparaginyl-tRNA(Asn) + AMP + diphosphate + H(+). In Xanthomonas axonopodis pv. citri (strain 306), this protein is Asparagine--tRNA ligase.